Here is a 406-residue protein sequence, read N- to C-terminus: Dual-specificity RNA methyltransferase RlmN (406 aa).

E119 (proton acceptor) is an active-site residue. The region spanning 125–370 (DKGRGTLCVS…AMVRRTRGDD (246 aa)) is the Radical SAM core domain. An intrachain disulfide couples C132 to C375. C139, C143, and C146 together coordinate [4Fe-4S] cluster. S-adenosyl-L-methionine contacts are provided by residues 192 to 193 (GE), S224, 246 to 248 (SLH), and N332. C375 (S-methylcysteine intermediate) is an active-site residue.

The protein belongs to the radical SAM superfamily. RlmN family. [4Fe-4S] cluster serves as cofactor.

The protein localises to the cytoplasm. The enzyme catalyses adenosine(2503) in 23S rRNA + 2 reduced [2Fe-2S]-[ferredoxin] + 2 S-adenosyl-L-methionine = 2-methyladenosine(2503) in 23S rRNA + 5'-deoxyadenosine + L-methionine + 2 oxidized [2Fe-2S]-[ferredoxin] + S-adenosyl-L-homocysteine. It carries out the reaction adenosine(37) in tRNA + 2 reduced [2Fe-2S]-[ferredoxin] + 2 S-adenosyl-L-methionine = 2-methyladenosine(37) in tRNA + 5'-deoxyadenosine + L-methionine + 2 oxidized [2Fe-2S]-[ferredoxin] + S-adenosyl-L-homocysteine. Its function is as follows. Specifically methylates position 2 of adenine 2503 in 23S rRNA and position 2 of adenine 37 in tRNAs. m2A2503 modification seems to play a crucial role in the proofreading step occurring at the peptidyl transferase center and thus would serve to optimize ribosomal fidelity. The chain is Dual-specificity RNA methyltransferase RlmN from Xylella fastidiosa (strain Temecula1 / ATCC 700964).